The chain runs to 172 residues: Large ribosomal subunit protein uL10 (172 aa).

Belongs to the universal ribosomal protein uL10 family. As to quaternary structure, part of the ribosomal stalk of the 50S ribosomal subunit. The N-terminus interacts with L11 and the large rRNA to form the base of the stalk. The C-terminus forms an elongated spine to which L12 dimers bind in a sequential fashion forming a multimeric L10(L12)X complex.

Functionally, forms part of the ribosomal stalk, playing a central role in the interaction of the ribosome with GTP-bound translation factors. This Methylobacterium radiotolerans (strain ATCC 27329 / DSM 1819 / JCM 2831 / NBRC 15690 / NCIMB 10815 / 0-1) protein is Large ribosomal subunit protein uL10.